The sequence spans 51 residues: Large ribosomal subunit protein eL39-like (51 aa).

The protein belongs to the eukaryotic ribosomal protein eL39 family. In terms of assembly, component of a male germ cell-specific 60S large ribosomal subunit (LSU), which contains RPL10L and RPL39L, instead of RPL10 and RPL39 paralogs. The composition of the rest of the complex is similar to classical ribosomes. As to expression, highly expressed in spermatocytes and spermatids. Highly expressed in embryonic stem cells.

It is found in the cytoplasm. Male germ cell-specific component of the ribosome, which is required for the formation of sperm and male fertility. Replaces the RPL39 paralog in the ribosome of male germ cells. The ribosome is a large ribonucleoprotein complex responsible for the synthesis of proteins in the cell. The male germ cell-specific ribosome displays a ribosomal polypeptide exit tunnel of distinct size and charge states compared with the classical ribosome. It is responsible for regulating the biosynthesis and folding of a subset of male germ-cell-specific proteins that are essential for the formation of sperm. This chain is Large ribosomal subunit protein eL39-like, found in Mus musculus (Mouse).